The following is a 270-amino-acid chain: Interleukin-33 (270 aa).

Residues 1 to 65 (MKPKMKYSTN…EACYFRRETT (65 aa)) are homeodomain-like HTH domain. A propeptide spanning residues 1-94 (MKPKMKYSTN…CQQQSTVESF (94 aa)) is cleaved from the precursor. The interaction with RELA stretch occupies residues 64–111 (TTKRPSLKTDRKHKRHLVLAACQQQSTVESFAFGISGVQKYTRALHDS).

This sequence belongs to the IL-1 family. Highly divergent. As to quaternary structure, forms a 1:1:1 heterotrimeric complex with its primary high-affinity receptor IL1RL1 and the coreceptor IL1RAP. Interacts with cargo receptor TMED10; the interaction mediates the translocation from the cytoplasm into the ERGIC (endoplasmic reticulum-Golgi intermediate compartment) and thereby secretion. The full-length protein can be released from cells and is able to signal via the IL1RL1/ST2 receptor. However, proteolytic processing by CELA1, CSTG/cathepsin G and ELANE/neutrophil elastase produces C-terminal peptides that are more active than the unprocessed full-length protein. May also be proteolytically processed by calpains. Proteolytic cleavage mediated by apoptotic caspases including CASP3 and CASP7 results in IL33 inactivation. In vitro proteolytic cleavage by CASP1 was reported but could not be confirmed in vivo suggesting that IL33 is probably not a direct substrate for that caspase.

It localises to the nucleus. The protein resides in the chromosome. Its subcellular location is the cytoplasm. It is found in the cytoplasmic vesicle. The protein localises to the secretory vesicle. It localises to the secreted. Cytokine that binds to and signals through the IL1RL1/ST2 receptor which in turn activates NF-kappa-B and MAPK signaling pathways in target cells. Involved in the maturation of Th2 cells inducing the secretion of T-helper type 2-associated cytokines. Also involved in activation of mast cells, basophils, eosinophils and natural killer cells. Acts as a chemoattractant for Th2 cells, and may function as an 'alarmin', that amplifies immune responses during tissue injury. Induces rapid UCP2-dependent mitochondrial rewiring that attenuates the generation of reactive oxygen species and preserves the integrity of Krebs cycle required for persistent production of itaconate and subsequent GATA3-dependent differentiation of inflammation-resolving alternatively activated macrophages. Its function is as follows. In quiescent endothelia the uncleaved form is constitutively and abundantly expressed, and acts as a chromatin-associated nuclear factor with transcriptional repressor properties, it may sequester nuclear NF-kappaB/RELA, lowering expression of its targets. This form is rapidely lost upon angiogenic or pro-inflammatory activation. This chain is Interleukin-33 (IL33), found in Pongo abelii (Sumatran orangutan).